Here is a 291-residue protein sequence, read N- to C-terminus: N-acetylmannosamine kinase (291 aa).

ATP-binding positions include A5–K12 and G132–C139. Positions 156, 166, 168, and 173 each coordinate Zn(2+).

This sequence belongs to the ROK (NagC/XylR) family. NanK subfamily. In terms of assembly, homodimer.

The enzyme catalyses an N-acyl-D-mannosamine + ATP = an N-acyl-D-mannosamine 6-phosphate + ADP + H(+). It functions in the pathway amino-sugar metabolism; N-acetylneuraminate degradation; D-fructose 6-phosphate from N-acetylneuraminate: step 2/5. Its function is as follows. Catalyzes the phosphorylation of N-acetylmannosamine (ManNAc) to ManNAc-6-P. The sequence is that of N-acetylmannosamine kinase from Salmonella typhi.